A 348-amino-acid polypeptide reads, in one-letter code: Ketol-acid reductoisomerase (NADP(+)) (348 aa).

Residues 2–182 (AKTYYDHDAD…GCTRAGVLET (181 aa)) form the KARI N-terminal Rossmann domain. NADP(+)-binding positions include 25–28 (YGSQ), Ser-51, Ser-53, and 83–86 (DTAQ). The active site involves His-108. Gly-134 contributes to the NADP(+) binding site. The 146-residue stretch at 183 to 328 (TFKEETETDL…EKLRAAMPFL (146 aa)) folds into the KARI C-terminal knotted domain. 4 residues coordinate Mg(2+): Asp-191, Glu-195, Glu-227, and Glu-231. Position 252 (Ser-252) interacts with substrate.

Belongs to the ketol-acid reductoisomerase family. It depends on Mg(2+) as a cofactor.

It catalyses the reaction (2R)-2,3-dihydroxy-3-methylbutanoate + NADP(+) = (2S)-2-acetolactate + NADPH + H(+). The enzyme catalyses (2R,3R)-2,3-dihydroxy-3-methylpentanoate + NADP(+) = (S)-2-ethyl-2-hydroxy-3-oxobutanoate + NADPH + H(+). It functions in the pathway amino-acid biosynthesis; L-isoleucine biosynthesis; L-isoleucine from 2-oxobutanoate: step 2/4. It participates in amino-acid biosynthesis; L-valine biosynthesis; L-valine from pyruvate: step 2/4. Its function is as follows. Involved in the biosynthesis of branched-chain amino acids (BCAA). Catalyzes an alkyl-migration followed by a ketol-acid reduction of (S)-2-acetolactate (S2AL) to yield (R)-2,3-dihydroxy-isovalerate. In the isomerase reaction, S2AL is rearranged via a Mg-dependent methyl migration to produce 3-hydroxy-3-methyl-2-ketobutyrate (HMKB). In the reductase reaction, this 2-ketoacid undergoes a metal-dependent reduction by NADPH to yield (R)-2,3-dihydroxy-isovalerate. This chain is Ketol-acid reductoisomerase (NADP(+)), found in Acidobacterium capsulatum (strain ATCC 51196 / DSM 11244 / BCRC 80197 / JCM 7670 / NBRC 15755 / NCIMB 13165 / 161).